Reading from the N-terminus, the 388-residue chain is Methylthioribose-1-phosphate isomerase (388 aa).

The Proton donor role is filled by aspartate 258.

The protein belongs to the eIF-2B alpha/beta/delta subunits family. MtnA subfamily.

The protein resides in the cytoplasm. It is found in the nucleus. It carries out the reaction 5-(methylsulfanyl)-alpha-D-ribose 1-phosphate = 5-(methylsulfanyl)-D-ribulose 1-phosphate. Its pathway is amino-acid biosynthesis; L-methionine biosynthesis via salvage pathway; L-methionine from S-methyl-5-thio-alpha-D-ribose 1-phosphate: step 1/6. Functionally, catalyzes the interconversion of methylthioribose-1-phosphate (MTR-1-P) into methylthioribulose-1-phosphate (MTRu-1-P). The sequence is that of Methylthioribose-1-phosphate isomerase (mri-1) from Neurospora crassa (strain ATCC 24698 / 74-OR23-1A / CBS 708.71 / DSM 1257 / FGSC 987).